We begin with the raw amino-acid sequence, 268 residues long: Tryptophan synthase alpha chain (268 aa).

Residues glutamate 49 and aspartate 60 each act as proton acceptor in the active site.

This sequence belongs to the TrpA family. As to quaternary structure, tetramer of two alpha and two beta chains.

It carries out the reaction (1S,2R)-1-C-(indol-3-yl)glycerol 3-phosphate + L-serine = D-glyceraldehyde 3-phosphate + L-tryptophan + H2O. Its pathway is amino-acid biosynthesis; L-tryptophan biosynthesis; L-tryptophan from chorismate: step 5/5. Its function is as follows. The alpha subunit is responsible for the aldol cleavage of indoleglycerol phosphate to indole and glyceraldehyde 3-phosphate. In Yersinia enterocolitica serotype O:8 / biotype 1B (strain NCTC 13174 / 8081), this protein is Tryptophan synthase alpha chain.